We begin with the raw amino-acid sequence, 276 residues long: 2-dehydro-3-deoxyphosphooctonate aldolase (276 aa).

This sequence belongs to the KdsA family.

It localises to the cytoplasm. It carries out the reaction D-arabinose 5-phosphate + phosphoenolpyruvate + H2O = 3-deoxy-alpha-D-manno-2-octulosonate-8-phosphate + phosphate. The protein operates within carbohydrate biosynthesis; 3-deoxy-D-manno-octulosonate biosynthesis; 3-deoxy-D-manno-octulosonate from D-ribulose 5-phosphate: step 2/3. The chain is 2-dehydro-3-deoxyphosphooctonate aldolase from Stenotrophomonas maltophilia (strain K279a).